We begin with the raw amino-acid sequence, 64 residues long: Large ribosomal subunit protein uL30 (64 aa).

The segment at 1–22 (MAKAAKTIKVEQTGSAIRRHHS) is disordered.

It belongs to the universal ribosomal protein uL30 family. As to quaternary structure, part of the 50S ribosomal subunit.

The chain is Large ribosomal subunit protein uL30 from Nitrobacter winogradskyi (strain ATCC 25391 / DSM 10237 / CIP 104748 / NCIMB 11846 / Nb-255).